We begin with the raw amino-acid sequence, 211 residues long: MEIRIVDHPLAASRLTIMRDKRTNNAGFRAALADLGAMLVYEASRDLAIEQFPVSTPVADTQGTRLQDPPIIVPIIRAGLGMVDPALSMIPDAQVGFIGMARDEATHQPVPYLEALPDDLSGRTVFCVDPMLATGGSLLHAIKLLADRGATDITAICMVSAQEGVDALAESGLPCRLVTATIDPELNDDAYIVPGLGDAGDRLYGPRNIDL.

5-phospho-alpha-D-ribose 1-diphosphate contacts are provided by residues Arg77, Arg102, and 129-137 (DPMLATGGS). Residues Ile192 and 197 to 199 (GDA) each bind uracil. Asp198 contacts 5-phospho-alpha-D-ribose 1-diphosphate.

The protein belongs to the UPRTase family. Mg(2+) serves as cofactor.

The catalysed reaction is UMP + diphosphate = 5-phospho-alpha-D-ribose 1-diphosphate + uracil. The protein operates within pyrimidine metabolism; UMP biosynthesis via salvage pathway; UMP from uracil: step 1/1. Allosterically activated by GTP. Functionally, catalyzes the conversion of uracil and 5-phospho-alpha-D-ribose 1-diphosphate (PRPP) to UMP and diphosphate. This Corynebacterium diphtheriae (strain ATCC 700971 / NCTC 13129 / Biotype gravis) protein is Uracil phosphoribosyltransferase.